The sequence spans 147 residues: Deoxyuridine 5'-triphosphate nucleotidohydrolase (147 aa).

Substrate-binding positions include 67–69, Asn80, and 84–86; these read RSG and TID.

Belongs to the dUTPase family. Mg(2+) serves as cofactor.

The catalysed reaction is dUTP + H2O = dUMP + diphosphate + H(+). Its pathway is pyrimidine metabolism; dUMP biosynthesis; dUMP from dCTP (dUTP route): step 2/2. This enzyme is involved in nucleotide metabolism: it produces dUMP, the immediate precursor of thymidine nucleotides and it decreases the intracellular concentration of dUTP so that uracil cannot be incorporated into DNA. In Anaplasma marginale (strain St. Maries), this protein is Deoxyuridine 5'-triphosphate nucleotidohydrolase.